A 231-amino-acid polypeptide reads, in one-letter code: Large ribosomal subunit protein uL1 (231 aa).

Belongs to the universal ribosomal protein uL1 family. Part of the 50S ribosomal subunit.

In terms of biological role, binds directly to 23S rRNA. The L1 stalk is quite mobile in the ribosome, and is involved in E site tRNA release. Functionally, protein L1 is also a translational repressor protein, it controls the translation of the L11 operon by binding to its mRNA. This is Large ribosomal subunit protein uL1 from Allorhizobium ampelinum (strain ATCC BAA-846 / DSM 112012 / S4) (Agrobacterium vitis (strain S4)).